The chain runs to 103 residues: OMEGA-ectatommitoxin(02)-Rm1d (103 aa).

The first 30 residues, 1–30, serve as a signal peptide directing secretion; sequence MKDSYISIVIAYLMVTFILVSSMPIEGEKR. Cystine bridges form between Cys39/Cys54, Cys49/Cys70, and Cys72/Cys81. The EGF-like domain occupies 43 to 82; the sequence is LNDENYCFNGKCVHLVAQDEPGKPYYSCICDEFYIGERCG.

Belongs to the EGF domain peptide family. Expressed by the venom gland.

It localises to the secreted. In terms of biological role, ant peptide with probable defensive activity which acts as a potent agonist of the mammalian epidermal growth factor receptor (EGFR). Mimics, both structurally and functionally, vertebrate epidermal growth factor (EGF) peptide hormones. In vivo, intraplantar injection in mice causes long-lasting (several days) hypersensitivity of the injected paw to both mechanical and thermal stimuli. Its long-lasting effect is unusual for venom toxins whose effects are usually immediate. One possible explanation is that it would reduce the duration of a nest attack, discourage future attacks, or enhance the actions of subsequent exposure to other pain-inducing venom peptides. The sequence is that of OMEGA-ectatommitoxin(02)-Rm1d from Rhytidoponera metallica (Australian green-headed ant).